The following is a 291-amino-acid chain: Exosome complex exonuclease RRP42 (291 aa).

Ala-2 carries the N-acetylalanine modification. At Lys-116 the chain carries N6-acetyllysine.

This sequence belongs to the RNase PH family. Component of the RNA exosome core complex (Exo-9), composed of EXOSC1, EXOSC2, EXOSC3, EXOSC4, EXOSC5, EXOSC6, EXOSC7, EXOSC8 and EXOSC9; within the complex interacts with EXOSC2 and EXOSC4. The catalytically inactive RNA exosome core complex (Exo-9) associates with the catalytic subunit EXOSC10/RRP6. Exo-9 may associate with DIS3 to form the nucleolar exosome complex, or DIS3L to form the cytoplasmic exosome complex. Exo-9 is formed by a hexameric base ring consisting of the heterodimers EXOSC4-EXOSC9, EXOSC5-EXOSC8 and EXOSC6-EXOSC7, and a cap ring consisting of EXOSC1, EXOSC2 and EXOSC3. The RNA exosome complex associates with cofactors C1D/RRP47, MPHOSPH6/MPP6 and MTREX/MTR4. Interacts with ZC3HAV1. Interacts with DIS3; the interaction is direct.

The protein localises to the nucleus. The protein resides in the nucleolus. Its subcellular location is the cytoplasm. Functionally, non-catalytic component of the RNA exosome complex which has 3'-&gt;5' exoribonuclease activity and participates in a multitude of cellular RNA processing and degradation events. In the nucleus, the RNA exosome complex is involved in proper maturation of stable RNA species such as rRNA, snRNA and snoRNA, in the elimination of RNA processing by-products and non-coding 'pervasive' transcripts, such as antisense RNA species and promoter-upstream transcripts (PROMPTs), and of mRNAs with processing defects, thereby limiting or excluding their export to the cytoplasm. The RNA exosome may be involved in Ig class switch recombination (CSR) and/or Ig variable region somatic hypermutation (SHM) by targeting AICDA deamination activity to transcribed dsDNA substrates. In the cytoplasm, the RNA exosome complex is involved in general mRNA turnover and specifically degrades inherently unstable mRNAs containing AU-rich elements (AREs) within their 3' untranslated regions, and in RNA surveillance pathways, preventing translation of aberrant mRNAs. It seems to be involved in degradation of histone mRNA. The catalytic inactive RNA exosome core complex of 9 subunits (Exo-9) is proposed to play a pivotal role in the binding and presentation of RNA for ribonucleolysis, and to serve as a scaffold for the association with catalytic subunits and accessory proteins or complexes. In Mus musculus (Mouse), this protein is Exosome complex exonuclease RRP42 (Exosc7).